Consider the following 1001-residue polypeptide: Serine/threonine-protein kinase TAO1 (1001 aa).

A Phosphoserine modification is found at Ser9. The Protein kinase domain maps to 28 to 281 (FTDLREIGHG…SEELLKHMFV (254 aa)). Residues 34–42 (IGHGSFGAV) and Lys57 each bind ATP. Asp151 functions as the Proton acceptor in the catalytic mechanism. Disordered regions lie at residues 324–380 (PAVE…DKSE) and 404–433 (ENYQEEGDPRTRASDPQSPPQVSRHKSHYR). Residues 350–370 (SNQSIPSMSISASSQSSSVNS) show a composition bias toward low complexity. Residues Ser421 and Ser445 each carry the phosphoserine modification. Positions 458-651 (SELREQMSGY…QTQKDLEHAM (194 aa)) form a coiled coil. Residues 567–587 (KEELNENQSTPKKEKQEWLSK) form a disordered region. Over residues 577 to 587 (PKKEKQEWLSK) the composition is skewed to basic and acidic residues. Position 669 is a phosphothreonine (Thr669). Residues 754 to 877 (KAVLKRLKEE…LERQAREIEA (124 aa)) adopt a coiled-coil conformation. Positions 905-1001 (PGASSWSHNP…ISNGSHMSYT (97 aa)) are disordered. Positions 921–930 (HWGHPMGGTP) are enriched in low complexity. Ser965 is subject to Phosphoserine. Over residues 975–1001 (GGRTEQGMSRSTSVTSQISNGSHMSYT) the composition is skewed to polar residues.

It belongs to the protein kinase superfamily. STE Ser/Thr protein kinase family. STE20 subfamily. In terms of assembly, self-associates. Interacts with MAP2K3. Interacts with SPRED1. Interacts with TESK1; the interaction inhibits TAOK1 kinase activity. Interacts with MAP3K7. Post-translationally, proteolytically processed by caspase-3 (CASP3). In terms of processing, autophosphorylated. Phosphorylated by ATM in response to DNA damage. Phosphorylated by LRRK2.

It is found in the cytoplasm. The catalysed reaction is L-seryl-[protein] + ATP = O-phospho-L-seryl-[protein] + ADP + H(+). It catalyses the reaction L-threonyl-[protein] + ATP = O-phospho-L-threonyl-[protein] + ADP + H(+). With respect to regulation, serine/threonine-protein kinase activity is inhibited by SPRED1. Functionally, serine/threonine-protein kinase involved in various processes such as p38/MAPK14 stress-activated MAPK cascade, DNA damage response and regulation of cytoskeleton stability. Phosphorylates MAP2K3, MAP2K6 and MARK2. Acts as an activator of the p38/MAPK14 stress-activated MAPK cascade by mediating phosphorylation and subsequent activation of the upstream MAP2K3 and MAP2K6 kinases. Involved in G-protein coupled receptor signaling to p38/MAPK14. In response to DNA damage, involved in the G2/M transition DNA damage checkpoint by activating the p38/MAPK14 stress-activated MAPK cascade, probably by mediating phosphorylation of MAP2K3 and MAP2K6. Acts as a regulator of cytoskeleton stability by phosphorylating 'Thr-208' of MARK2, leading to activate MARK2 kinase activity and subsequent phosphorylation and detachment of MAPT/TAU from microtubules. Also acts as a regulator of apoptosis: regulates apoptotic morphological changes, including cell contraction, membrane blebbing and apoptotic bodies formation via activation of the MAPK8/JNK cascade. During fetal development, it plays an essential role in the regulation of neuronal differentiation and migration to the cortical plate. The chain is Serine/threonine-protein kinase TAO1 (Taok1) from Mus musculus (Mouse).